A 446-amino-acid polypeptide reads, in one-letter code: tRNA-2-methylthio-N(6)-dimethylallyladenosine synthase (446 aa).

Residues 2–122 enclose the MTTase N-terminal domain; sequence KKAYVKSYGC…LPDLLRQSRE (121 aa). The [4Fe-4S] cluster site is built by cysteine 11, cysteine 47, cysteine 85, cysteine 157, cysteine 161, and cysteine 164. In terms of domain architecture, Radical SAM core spans 143–375; sequence RNRGVTGFLT…QDLLDRQRHA (233 aa). The TRAM domain occupies 378 to 440; sequence AASVGTLTEI…SNSLFGETLE (63 aa).

Belongs to the methylthiotransferase family. MiaB subfamily. In terms of assembly, monomer. [4Fe-4S] cluster is required as a cofactor.

The protein localises to the cytoplasm. It catalyses the reaction N(6)-dimethylallyladenosine(37) in tRNA + (sulfur carrier)-SH + AH2 + 2 S-adenosyl-L-methionine = 2-methylsulfanyl-N(6)-dimethylallyladenosine(37) in tRNA + (sulfur carrier)-H + 5'-deoxyadenosine + L-methionine + A + S-adenosyl-L-homocysteine + 2 H(+). Its function is as follows. Catalyzes the methylthiolation of N6-(dimethylallyl)adenosine (i(6)A), leading to the formation of 2-methylthio-N6-(dimethylallyl)adenosine (ms(2)i(6)A) at position 37 in tRNAs that read codons beginning with uridine. This Methylorubrum extorquens (strain PA1) (Methylobacterium extorquens) protein is tRNA-2-methylthio-N(6)-dimethylallyladenosine synthase.